A 90-amino-acid chain; its full sequence is Small ribosomal subunit protein uS15 (90 aa).

The protein belongs to the universal ribosomal protein uS15 family. Part of the 30S ribosomal subunit. Forms a bridge to the 50S subunit in the 70S ribosome, contacting the 23S rRNA.

In terms of biological role, one of the primary rRNA binding proteins, it binds directly to 16S rRNA where it helps nucleate assembly of the platform of the 30S subunit by binding and bridging several RNA helices of the 16S rRNA. Its function is as follows. Forms an intersubunit bridge (bridge B4) with the 23S rRNA of the 50S subunit in the ribosome. This chain is Small ribosomal subunit protein uS15, found in Campylobacter hominis (strain ATCC BAA-381 / DSM 21671 / CCUG 45161 / LMG 19568 / NCTC 13146 / CH001A).